Consider the following 283-residue polypeptide: Acetylglutamate kinase (283 aa).

Residues 63 to 64 (GG), R85, and N178 contribute to the substrate site.

Belongs to the acetylglutamate kinase family. ArgB subfamily.

Its subcellular location is the plastid. It is found in the chloroplast. It catalyses the reaction N-acetyl-L-glutamate + ATP = N-acetyl-L-glutamyl 5-phosphate + ADP. It participates in amino-acid biosynthesis; L-arginine biosynthesis; N(2)-acetyl-L-ornithine from L-glutamate: step 2/4. Its function is as follows. Catalyzes the ATP-dependent phosphorylation of N-acetyl-L-glutamate. This Porphyra purpurea (Red seaweed) protein is Acetylglutamate kinase.